Here is a 268-residue protein sequence, read N- to C-terminus: FKBP-type peptidyl-prolyl cis-trans isomerase FkpA (268 aa).

The first 20 residues, 1–20 (MNNFLKVSLLAAAVAVSLTA), serve as a signal peptide directing secretion. A PPIase FKBP-type domain is found at 172–257 (TDIVKVHYTG…VFDVELLAIE (86 aa)).

The protein belongs to the FKBP-type PPIase family.

The protein localises to the periplasm. It carries out the reaction [protein]-peptidylproline (omega=180) = [protein]-peptidylproline (omega=0). Its function is as follows. PPIases accelerate the folding of proteins. It catalyzes the cis-trans isomerization of proline imidic peptide bonds in oligopeptides. FkpA probably acts in the folding of extracytoplasmic proteins. In Aeromonas hydrophila, this protein is FKBP-type peptidyl-prolyl cis-trans isomerase FkpA (fkpA).